A 117-amino-acid chain; its full sequence is Ribonuclease P protein component (117 aa).

Belongs to the RnpA family. In terms of assembly, consists of a catalytic RNA component (M1 or rnpB) and a protein subunit.

It catalyses the reaction Endonucleolytic cleavage of RNA, removing 5'-extranucleotides from tRNA precursor.. In terms of biological role, RNaseP catalyzes the removal of the 5'-leader sequence from pre-tRNA to produce the mature 5'-terminus. It can also cleave other RNA substrates such as 4.5S RNA. The protein component plays an auxiliary but essential role in vivo by binding to the 5'-leader sequence and broadening the substrate specificity of the ribozyme. This Lactococcus lactis subsp. lactis (strain IL1403) (Streptococcus lactis) protein is Ribonuclease P protein component.